The chain runs to 341 residues: Short chain dehydrogenase virL (341 aa).

The NADP(+) site is built by leucine 49, lysine 74, aspartate 97, asparagine 123, tyrosine 210, and lysine 214. Catalysis depends on tyrosine 210, which acts as the Proton donor. Lysine 214 functions as the Lowers pKa of active site Tyr in the catalytic mechanism.

Belongs to the short-chain dehydrogenases/reductases (SDR) family.

It participates in secondary metabolite biosynthesis. Functionally, short chain dehydrogenase; part of the gene cluster that mediates the biosynthesis of virensols and trichoxide, fungal natural products that contain or are derived from a salicylaldehyde core. The pathway begins with the synthesis of the reduced chain in virensol C by the highly reducing polyketide synthase virA via condensation of one acetate and 8 malonate units. VirA has interesting programming rules since the first 2 ketides are fully reduced, the 3 following ketides undergo beta-dehydration, and the last 3 ketides are only reduced to beta-hydroxys to yield the trihydroxy portion. The production of aldehyde virensol C by virA alone is surprising, since virA does not contain a reductase (R) domain that is typically associated with reductive product release in HRPKS. The cupin-domain enzyme virC is involved in enhancing virA product turnover. The short-chain dehydrogenase virB then oxidizes the C-7 alcohol of virensol C to a ketone, yielding virensol D. Virensol D is further transformed to salicylaldehyde 5-deoxyaurocitrin by the short-chain dehydrogenase virD. VirD catalyzes the dehydrogenation of C-3 to form the beta-ketone aldehyde, which is followed by the generation of the nucleophilic C-2 that is required for the intramolecular aldol condensation between C-2 and C-7, itself followed by dehydration and aromatization which leads to salicylaldehyde 5-deoxyaurocitrin. While the dehydrogenation of virensol D is definitely catalyzed by virD, the aldol condensation and dehydration may be uncatalyzed or assisted by virD. The short chain dehydrogenase virG then converts salicylaldehyde 5-deoxyaurocitrin into virensol B which is further hydroxylated by the cytochrome P450 monooxygenase virE to yield the hydroquinone virensol A. VirI then may oxidize virensol A to form the quinone, while virH performs the epoxidation. Finally, the two remaining short-chain dehydrogenases, virK and virL, are probably responsible for reducing the ketones to the corresponding alcohols to furnish the epoxycyclohexanol structure in trichoxide. The chain is Short chain dehydrogenase virL from Hypocrea virens (strain Gv29-8 / FGSC 10586) (Gliocladium virens).